Consider the following 439-residue polypeptide: Mitochondrial distribution and morphology protein 12 (439 aa).

Residues 1–439 (MSIDVNWRFA…VYPSFWTFLI (439 aa)) form the SMP-LTD domain. Disordered stretches follow at residues 70-103 (YEED…LNEP), 185-274 (GWSD…PPRM), and 354-386 (PEQQ…RHGG). Basic and acidic residues predominate over residues 78-91 (TSDASEERGEEHSS). A compositionally biased stretch (polar residues) spans 215–245 (DTSNSTSRPSTANTLPSHPSGSSKNSGQAAT). Composition is skewed to basic and acidic residues over residues 247 to 261 (RNDH…HLED) and 362 to 371 (SAGDDHRPQS).

Belongs to the MDM12 family. In terms of assembly, component of the ER-mitochondria encounter structure (ERMES) or MDM complex, composed of mmm1, mdm10, mdm12 and mdm34. A mmm1 homodimer associates with one molecule of mdm12 on each side in a pairwise head-to-tail manner, and the SMP-LTD domains of mmm1 and mdm12 generate a continuous hydrophobic tunnel for phospholipid trafficking.

The protein resides in the mitochondrion outer membrane. It localises to the endoplasmic reticulum membrane. Its function is as follows. Component of the ERMES/MDM complex, which serves as a molecular tether to connect the endoplasmic reticulum (ER) and mitochondria. Components of this complex are involved in the control of mitochondrial shape and protein biogenesis, and function in nonvesicular lipid trafficking between the ER and mitochondria. Mdm12 is required for the interaction of the ER-resident membrane protein mmm1 and the outer mitochondrial membrane-resident beta-barrel protein mdm10. The mdm12-mmm1 subcomplex functions in the major beta-barrel assembly pathway that is responsible for biogenesis of all mitochondrial outer membrane beta-barrel proteins, and acts in a late step after the SAM complex. The mdm10-mdm12-mmm1 subcomplex further acts in the TOM40-specific pathway after the action of the mdm12-mmm1 complex. Essential for establishing and maintaining the structure of mitochondria and maintenance of mtDNA nucleoids. In Aspergillus fumigatus (strain CBS 144.89 / FGSC A1163 / CEA10) (Neosartorya fumigata), this protein is Mitochondrial distribution and morphology protein 12.